The primary structure comprises 190 residues: Spermatogenesis-associated protein 12 (190 aa).

In terms of tissue distribution, expressed in testis.

The chain is Spermatogenesis-associated protein 12 (SPATA12) from Homo sapiens (Human).